A 526-amino-acid polypeptide reads, in one-letter code: ATP synthase subunit alpha (526 aa).

171–178 (GDRQVGKT) contributes to the ATP binding site.

Belongs to the ATPase alpha/beta chains family. As to quaternary structure, F-type ATPases have 2 components, CF(1) - the catalytic core - and CF(0) - the membrane proton channel. CF(1) has five subunits: alpha(3), beta(3), gamma(1), delta(1), epsilon(1). CF(0) has three main subunits: a(1), b(2) and c(9-12). The alpha and beta chains form an alternating ring which encloses part of the gamma chain. CF(1) is attached to CF(0) by a central stalk formed by the gamma and epsilon chains, while a peripheral stalk is formed by the delta and b chains.

Its subcellular location is the cell inner membrane. It carries out the reaction ATP + H2O + 4 H(+)(in) = ADP + phosphate + 5 H(+)(out). Its function is as follows. Produces ATP from ADP in the presence of a proton gradient across the membrane. The alpha chain is a regulatory subunit. The protein is ATP synthase subunit alpha of Azobacteroides pseudotrichonymphae genomovar. CFP2.